We begin with the raw amino-acid sequence, 471 residues long: Ribonuclease 3 (471 aa).

Positions 1-10 (MGSKVAGKKK) are enriched in basic residues. Disordered regions lie at residues 1–29 (MGSK…RENI) and 168–189 (NLNE…PTKA). Positions 20 to 29 (ENGSQQRENI) are enriched in polar residues. The segment covering 172-184 (KEDEEEDEGEDSY) has biased composition (acidic residues). The RNase III domain maps to 227-331 (LSGSEMINAH…YIGGLMEDDP (105 aa)). In terms of domain architecture, DRBM spans 369 to 437 (NAKRQLYSLI…AENALRDKKM (69 aa)). The segment at 451 to 471 (SESVLKDPSQKNKKRKFSDTS) is disordered. The span at 461–471 (KNKKRKFSDTS) shows a compositional bias: basic residues.

It catalyses the reaction Endonucleolytic cleavage to 5'-phosphomonoester.. Functionally, dsRNA-specific nuclease that cleaves eukaryotic pre-ribosomal RNA at the U3 snoRNP-dependent A0 site in the 5'-external transcribed spacer (ETS) and in the 3'-ETS. In vitro, cleaves synthetic 5'-ETS RNA A0 site in the absence of snoRNA or other factors. Has an essential growth function in addition to pre-rRNA processing. In Saccharomyces cerevisiae (strain ATCC 204508 / S288c) (Baker's yeast), this protein is Ribonuclease 3 (RNT1).